We begin with the raw amino-acid sequence, 1563 residues long: Pentafunctional AROM polypeptide (1563 aa).

Residues 1–382 (MAEPISNPTR…YEPKASVVED (382 aa)) are 3-dehydroquinate synthase. NAD(+)-binding positions include 48 to 50 (DTN), 82 to 85 (EYSK), 113 to 115 (GGV), and Asp118. A 7-phospho-2-dehydro-3-deoxy-D-arabino-heptonate-binding site is contributed by Arg129. 138–139 (TT) contributes to the NAD(+) binding site. 7-phospho-2-dehydro-3-deoxy-D-arabino-heptonate-binding residues include Asp145 and Lys151. Position 160 (Lys160) interacts with NAD(+). Asn161 contacts 7-phospho-2-dehydro-3-deoxy-D-arabino-heptonate. NAD(+) contacts are provided by residues 178 to 181 (FLNT) and Asn189. Glu193 provides a ligand contact to Zn(2+). 7-phospho-2-dehydro-3-deoxy-D-arabino-heptonate contacts are provided by residues 193–196 (EVIK) and Lys248. Glu258 functions as the Proton acceptor; for 3-dehydroquinate synthase activity in the catalytic mechanism. Residues 262–266 (RNLLN) and His269 each bind 7-phospho-2-dehydro-3-deoxy-D-arabino-heptonate. A Zn(2+)-binding site is contributed by His269. Catalysis depends on His273, which acts as the Proton acceptor; for 3-dehydroquinate synthase activity. The 7-phospho-2-dehydro-3-deoxy-D-arabino-heptonate site is built by His285 and Lys354. Position 285 (His285) interacts with Zn(2+). Residues 395–834 (VFAGVPKDLN…WDTMSNYFKV (440 aa)) form an EPSP synthase region. The active-site For EPSP synthase activity is Cys816. The segment at 857–1051 (PKSIFIIGMR…KKKPHSFFVS (195 aa)) is shikimate kinase. 864–871 (GMRGAGKS) provides a ligand contact to ATP. The 3-dehydroquinase stretch occupies residues 1052–1265 (LTVPNVSKAL…AAPGQLSAAE (214 aa)). His1168 serves as the catalytic Proton acceptor; for 3-dehydroquinate dehydratase activity. Lys1196 (schiff-base intermediate with substrate; for 3-dehydroquinate dehydratase activity) is an active-site residue. Residues 1278 to 1563 (PRSFHLFGNP…TDAQAAVMGN (286 aa)) are shikimate dehydrogenase.

The protein in the N-terminal section; belongs to the sugar phosphate cyclases superfamily. Dehydroquinate synthase family. It in the 2nd section; belongs to the EPSP synthase family. This sequence in the 3rd section; belongs to the shikimate kinase family. In the 4th section; belongs to the type-I 3-dehydroquinase family. The protein in the C-terminal section; belongs to the shikimate dehydrogenase family. As to quaternary structure, homodimer. Zn(2+) is required as a cofactor.

Its subcellular location is the cytoplasm. It carries out the reaction 7-phospho-2-dehydro-3-deoxy-D-arabino-heptonate = 3-dehydroquinate + phosphate. The enzyme catalyses 3-dehydroquinate = 3-dehydroshikimate + H2O. It catalyses the reaction shikimate + NADP(+) = 3-dehydroshikimate + NADPH + H(+). The catalysed reaction is shikimate + ATP = 3-phosphoshikimate + ADP + H(+). It carries out the reaction 3-phosphoshikimate + phosphoenolpyruvate = 5-O-(1-carboxyvinyl)-3-phosphoshikimate + phosphate. It functions in the pathway metabolic intermediate biosynthesis; chorismate biosynthesis; chorismate from D-erythrose 4-phosphate and phosphoenolpyruvate: step 2/7. It participates in metabolic intermediate biosynthesis; chorismate biosynthesis; chorismate from D-erythrose 4-phosphate and phosphoenolpyruvate: step 3/7. Its pathway is metabolic intermediate biosynthesis; chorismate biosynthesis; chorismate from D-erythrose 4-phosphate and phosphoenolpyruvate: step 4/7. The protein operates within metabolic intermediate biosynthesis; chorismate biosynthesis; chorismate from D-erythrose 4-phosphate and phosphoenolpyruvate: step 5/7. It functions in the pathway metabolic intermediate biosynthesis; chorismate biosynthesis; chorismate from D-erythrose 4-phosphate and phosphoenolpyruvate: step 6/7. In terms of biological role, the AROM polypeptide catalyzes 5 consecutive enzymatic reactions in prechorismate polyaromatic amino acid biosynthesis. In Neurospora crassa (strain ATCC 24698 / 74-OR23-1A / CBS 708.71 / DSM 1257 / FGSC 987), this protein is Pentafunctional AROM polypeptide.